Reading from the N-terminus, the 286-residue chain is MAPAVQQQQSGGGGGSTGAAAVGSTTRWCPTPEQLMMLEEMYRGGLRTPNAAQIQQITAHLSTYGRIEGKNVFYWFQNHKARDRQKLRRRLCISHHLLSCAHYYHHHLAAAAAVVPTTKLLTTLNPSSSSSSCGGGLNEDANSLLSPTSPTTPTSAAAAAAAAAYTTSYYYPFTAAAAPPPPRTSPAASPLFHYNQGGGGVVLPAAEAIGRSSSSSDYSLGKLVDNFGVALEETFPAQPQQPATTMAMTAVVDTTAVAAAAGGFCRPLKTLDLFPGGLKEEQHDVV.

2 disordered regions span residues 1 to 25 and 128 to 152; these read MAPA…VGST and SSSS…SPTT. Positions 23-87 form a DNA-binding region, homeobox; WUS-type; the sequence is GSTTRWCPTP…NHKARDRQKL (65 aa).

Belongs to the WUS homeobox family.

It localises to the nucleus. In terms of biological role, transcription factor which may be involved in developmental processes. This chain is Putative WUSCHEL-related homeobox 2 (WOX2), found in Oryza sativa subsp. indica (Rice).